Reading from the N-terminus, the 440-residue chain is Glyceraldehyde-3-phosphate dehydrogenase, testis-specific (440 aa).

Residues 1 to 105 form a testis-specific N-terminal extension region; it reads MSRRDVVLTN…PPPPPLQKPA (105 aa). Pro residues-rich tracts occupy residues 40–75 and 83–102; these read PPKL…PPQI and APPP…PPLQ. The interval 40 to 106 is disordered; sequence PPKLEDPPPT…PPPPLQKPAR (67 aa). Residues 117 to 118, aspartate 138, lysine 183, tyrosine 205, and threonine 225 contribute to the NAD(+) site; that span reads RI. Residues 255-257, threonine 286, 315-316, and arginine 338 each bind D-glyceraldehyde 3-phosphate; these read SCT and TG. Catalysis depends on cysteine 256, which acts as the Nucleophile. At serine 358 the chain carries Phosphoserine. Asparagine 420 is an NAD(+) binding site.

Belongs to the glyceraldehyde-3-phosphate dehydrogenase family. As to quaternary structure, homotetramer. Testis specific.

Its subcellular location is the cytoplasm. The catalysed reaction is D-glyceraldehyde 3-phosphate + phosphate + NAD(+) = (2R)-3-phospho-glyceroyl phosphate + NADH + H(+). The protein operates within carbohydrate degradation; glycolysis; pyruvate from D-glyceraldehyde 3-phosphate: step 1/5. Functionally, may play an important role in regulating the switch between different pathways for energy production during spermiogenesis and in the spermatozoon. Required for sperm motility and male fertility. This is Glyceraldehyde-3-phosphate dehydrogenase, testis-specific (Gapdhs) from Mus musculus (Mouse).